A 446-amino-acid polypeptide reads, in one-letter code: Citrate/sodium symporter (446 aa).

The next 5 helical transmembrane spans lie at 23-43 (IFGM…LSHF), 46-66 (AIPT…AIFG), 79-99 (IGGA…AGIF), 110-130 (VMDK…GAIL), and 148-168 (ILAG…CFGI). Na(+) is bound by residues Ile181 and Gly183. The citrate site is built by Asn186 and Gly187. A run of 5 helical transmembrane segments spans residues 213–233 (IAIL…LDMI), 267–287 (ETAV…VVAK), 289–309 (ILPS…LIVA), 335–355 (QLLW…QEII), and 364–384 (VIAA…GWLI). Na(+)-binding residues include Met399 and Asn401. Positions 402, 404, 405, and 428 each coordinate citrate. Residues 425–445 (ISSRLGGGIVLVIASIVFSMM) form a helical membrane-spanning segment.

The protein belongs to the 2-hydroxycarboxylate transporter (2-HCT) (TC 2.A.24) family. Homodimer.

Its subcellular location is the cell inner membrane. The catalysed reaction is citrate(out) + 2 Na(+)(out) = citrate(in) + 2 Na(+)(in). Its function is as follows. Secondary active transporter that catalyzes the uptake of citrate across the membrane with the concomitant uptake of sodium. Is specific for citrate. This Salmonella pullorum protein is Citrate/sodium symporter.